The following is a 134-amino-acid chain: Global transcriptional regulator Spx (134 aa).

Cys-10 and Cys-13 form a disulfide bridge.

It belongs to the ArsC family. Spx subfamily. Interacts with the C-terminal domain of the alpha subunit of the RNAP.

It is found in the cytoplasm. In terms of biological role, global transcriptional regulator that plays a key role in stress response and exerts either positive or negative regulation of genes. Acts by interacting with the C-terminal domain of the alpha subunit of the RNA polymerase (RNAP). This interaction can enhance binding of RNAP to the promoter region of target genes and stimulate their transcription, or block interaction of RNAP with activator. The sequence is that of Global transcriptional regulator Spx from Streptococcus pyogenes serotype M3 (strain ATCC BAA-595 / MGAS315).